The sequence spans 111 residues: Large ribosomal subunit protein uL22 (111 aa).

The protein belongs to the universal ribosomal protein uL22 family. In terms of assembly, part of the 50S ribosomal subunit.

This protein binds specifically to 23S rRNA; its binding is stimulated by other ribosomal proteins, e.g. L4, L17, and L20. It is important during the early stages of 50S assembly. It makes multiple contacts with different domains of the 23S rRNA in the assembled 50S subunit and ribosome. In terms of biological role, the globular domain of the protein is located near the polypeptide exit tunnel on the outside of the subunit, while an extended beta-hairpin is found that lines the wall of the exit tunnel in the center of the 70S ribosome. This is Large ribosomal subunit protein uL22 from Xanthomonas oryzae pv. oryzae (strain PXO99A).